The chain runs to 158 residues: NADH-quinone oxidoreductase subunit B (158 aa).

[4Fe-4S] cluster contacts are provided by Cys37, Cys38, Cys102, and Cys132.

Belongs to the complex I 20 kDa subunit family. NDH-1 is composed of 14 different subunits. Subunits NuoB, C, D, E, F, and G constitute the peripheral sector of the complex. [4Fe-4S] cluster serves as cofactor.

It is found in the cell inner membrane. It catalyses the reaction a quinone + NADH + 5 H(+)(in) = a quinol + NAD(+) + 4 H(+)(out). Its function is as follows. NDH-1 shuttles electrons from NADH, via FMN and iron-sulfur (Fe-S) centers, to quinones in the respiratory chain. Couples the redox reaction to proton translocation (for every two electrons transferred, four hydrogen ions are translocated across the cytoplasmic membrane), and thus conserves the redox energy in a proton gradient. The protein is NADH-quinone oxidoreductase subunit B of Aromatoleum aromaticum (strain DSM 19018 / LMG 30748 / EbN1) (Azoarcus sp. (strain EbN1)).